Reading from the N-terminus, the 351-residue chain is Fe-S cluster assembly protein DRE2 (351 aa).

Positions 1–151 are N-terminal SAM-like domain; the sequence is MATTGRVLLL…KPDIGAQQAI (151 aa). Residues 93–118 are disordered; it reads RNRENKPWGLSDGNGNNANSSRRYND. The span at 105-114 shows a compositional bias: polar residues; that stretch reads GNGNNANSSR. The linker stretch occupies residues 152 to 243; it reads PLKLGRRRKE…EDELLDEDDM (92 aa). Positions 253, 264, 267, and 269 each coordinate [2Fe-2S] cluster. Residues 253-269 are fe-S binding site A; that stretch reads CRPKPGKRRRACKDCSC. Residues Cys-314, Cys-317, Cys-325, and Cys-328 each coordinate [4Fe-4S] cluster. 2 short sequence motifs (cx2C motif) span residues 314-317 and 325-328; these read CGNC and CDGC. A fe-S binding site B region spans residues 314–328; it reads CGNCSLGDAFRCDGC.

Belongs to the anamorsin family. As to quaternary structure, monomer. Interacts with TAH18. Interacts with MIA40. It depends on [2Fe-2S] cluster as a cofactor. [4Fe-4S] cluster serves as cofactor.

Its subcellular location is the cytoplasm. It is found in the mitochondrion intermembrane space. Component of the cytosolic iron-sulfur (Fe-S) protein assembly (CIA) machinery required for the maturation of extramitochondrial Fe-S proteins. Part of an electron transfer chain functioning in an early step of cytosolic Fe-S biogenesis, facilitating the de novo assembly of a [4Fe-4S] cluster on the scaffold complex CFD1-NBP35. Electrons are transferred to DRE2 from NADPH via the FAD- and FMN-containing protein TAH18. TAH18-DRE2 are also required for the assembly of the diferric tyrosyl radical cofactor of ribonucleotide reductase (RNR), probably by providing electrons for reduction during radical cofactor maturation in the catalytic small subunit RNR2. In Ajellomyces capsulatus (strain H143) (Darling's disease fungus), this protein is Fe-S cluster assembly protein DRE2.